The primary structure comprises 145 residues: UPF0763 protein WS1752 (145 aa).

Belongs to the UPF0763 family.

The protein is UPF0763 protein WS1752 of Wolinella succinogenes (strain ATCC 29543 / DSM 1740 / CCUG 13145 / JCM 31913 / LMG 7466 / NCTC 11488 / FDC 602W) (Vibrio succinogenes).